The sequence spans 620 residues: LysM domain receptor-like kinase 3 (620 aa).

The N-terminal stretch at 1-23 (MNLKNGLLLFILFLDCVFFKVES) is a signal peptide. Topologically, residues 24 to 231 (KCVKGCDVAL…YSRTGIAKGS (208 aa)) are extracellular. 3 disulfide bridges follow: Cys25–Cys92, Cys29–Cys154, and Cys90–Cys152. A glycan (N-linked (GlcNAc...) asparagine) is linked at Asn46. Residues 46 to 72 (NISNFMQSKIVLTNSFDVIMSYNRDVV) form the LysM 1; degenerate domain. LysM domains are found at residues 102–148 (FEYT…KINV) and 167–210 (VTYP…VFIP). Chitin-binding positions include 108-114 (EGDDYDL) and 136-142 (DPNHIPV). Asn147 and Asn199 each carry an N-linked (GlcNAc...) asparagine glycan. A helical membrane pass occupies residues 232 to 252 (AVGIAMAGIFGLLLFVIYIYA). Residues 253-620 (KYFQKKEEEK…QSLINLLSTR (368 aa)) lie on the Cytoplasmic side of the membrane. Over residues 265–278 (LPQTSRAFSTQDAS) the composition is skewed to polar residues. Residues 265-292 (LPQTSRAFSTQDASGSAEYETSGSSGHA) form a disordered region. Phosphoserine is present on residues Ser269 and Ser273. One can recognise a Protein kinase domain in the interval 322 to 595 (FSLDNKIGQG…RSIVVALMTL (274 aa)). ATP contacts are provided by residues 328 to 336 (IGQGGFGAV) and Lys349. Asp441 functions as the Proton acceptor in the catalytic mechanism.

It belongs to the protein kinase superfamily. Ser/Thr protein kinase family. In terms of assembly, forms homodimers and homooligomers. Forms heteromeric complexes with NFP at the cell periphery in nodules. Interacts with PUB1. Autophosphorylated. Expressed in the epidermal and root hair cells of the developing root hair zone during nonsymbiotic growth. Accumulates in roots and nodules during symbiotic growth with rhizobia. Localized at the cell periphery in a narrow zone of about two cell layers (e.g. L1/L2 zone) at the nodule apex upon infection by rhizobia, from the meristem to the infection zone (at protein level).

It is found in the cell membrane. Its subcellular location is the vacuole lumen. The catalysed reaction is L-seryl-[protein] + ATP = O-phospho-L-seryl-[protein] + ADP + H(+). The enzyme catalyses L-threonyl-[protein] + ATP = O-phospho-L-threonyl-[protein] + ADP + H(+). In terms of biological role, putative receptor for S.meliloti Nod factor signals essential for the establishment of the nitrogen-fixing, root nodule symbiosis with S.meliloti. Involved in the control of root hair curling after S.meliloti infection, probably by modulating the reorganization of the microtubular cytoskeleton in epidermal and cortical cells. Regulates a subset of Nod factor-induced genes. This is LysM domain receptor-like kinase 3 from Medicago truncatula (Barrel medic).